A 1102-amino-acid chain; its full sequence is WD repeat-containing protein 72 (1102 aa).

WD repeat units lie at residues 15 to 54 (APPH…KISA), 60 to 102 (GHSA…CMEK), 160 to 197 (NCMC…NSIQ), 318 to 362 (KEQS…VSKF), 402 to 441 (AGTA…KARL), 459 to 504 (GHHQ…ILHK), 507 to 552 (LEAG…CLLH), and 555 to 594 (KHLF…LERH). Residues serine 1081 and serine 1083 each carry the phosphoserine modification.

The protein localises to the cytoplasmic vesicle. Its function is as follows. Plays a major role in formation of tooth enamel. Specifically required during the maturation phase of amelogenesis for normal formation of the enamel matrix and clearance of enamel proteins. May be involved in localization of the calcium transporter SLC24A4 to the ameloblast cell membrane. The sequence is that of WD repeat-containing protein 72 (WDR72) from Homo sapiens (Human).